The chain runs to 238 residues: Serine protease SplE (238 aa).

The N-terminal stretch at 1–36 (MNKNIIIKSIAALTILTSVTGVGTTVVEGIQQTAKA) is a signal peptide. Residues His-75, Asp-113, and Ser-191 each act as charge relay system in the active site.

The protein belongs to the peptidase S1B family.

It localises to the secreted. In Staphylococcus aureus (strain USA300), this protein is Serine protease SplE (splE).